A 397-amino-acid chain; its full sequence is Ornithine aminotransferase (397 aa).

N6-(pyridoxal phosphate)lysine is present on Lys-255.

This sequence belongs to the class-III pyridoxal-phosphate-dependent aminotransferase family. OAT subfamily. Pyridoxal 5'-phosphate is required as a cofactor.

The protein localises to the cytoplasm. It carries out the reaction a 2-oxocarboxylate + L-ornithine = L-glutamate 5-semialdehyde + an L-alpha-amino acid. It functions in the pathway amino-acid biosynthesis; L-proline biosynthesis; L-glutamate 5-semialdehyde from L-ornithine: step 1/1. Catalyzes the interconversion of ornithine to glutamate semialdehyde. The polypeptide is Ornithine aminotransferase (Macrococcus caseolyticus (strain JCSC5402) (Macrococcoides caseolyticum)).